Reading from the N-terminus, the 261-residue chain is Glucosamine-6-phosphate deaminase (261 aa).

D67 functions as the Proton acceptor; for enolization step in the catalytic mechanism. D136 acts as the For ring-opening step in catalysis. The active-site Proton acceptor; for ring-opening step is the H138. E143 acts as the For ring-opening step in catalysis.

This sequence belongs to the glucosamine/galactosamine-6-phosphate isomerase family. NagB subfamily.

The catalysed reaction is alpha-D-glucosamine 6-phosphate + H2O = beta-D-fructose 6-phosphate + NH4(+). It participates in amino-sugar metabolism; N-acetylneuraminate degradation; D-fructose 6-phosphate from N-acetylneuraminate: step 5/5. Functionally, catalyzes the reversible isomerization-deamination of glucosamine 6-phosphate (GlcN6P) to form fructose 6-phosphate (Fru6P) and ammonium ion. This chain is Glucosamine-6-phosphate deaminase, found in Beutenbergia cavernae (strain ATCC BAA-8 / DSM 12333 / CCUG 43141 / JCM 11478 / NBRC 16432 / NCIMB 13614 / HKI 0122).